The following is a 556-amino-acid chain: MASKPAAGKSRGEKRKRVVLTLKEKIDICTRLEKGESRKALMQEYNVGMSTLYDIRAHKAQLLRFFASSDSNKALEQRRTLHTPKLEHLDRVLYEWFLGKRSEGVPVSGPMLIEKAKDFYEQMQLTEPCVFSGGWLWRFKARHGIKKLDASSEKQSADHQAAEQFCAFFRSLAAEHGLSAEQVYNADETGLFWRCLPNPTPEGGAVPGPKQGKDRLTVLMCANATGSHRLKPLAIGKCSGPRAFKGIQHLPVAYKAQGNAWVDKEIFSDWFHHIFVPSVREHFRTIGLPEDSKAVLLLDSSRAHPQEAELVSSNVFTIFLPASVASLVQPMEQGIRRDFMRNFINPPVPLQGPHARYNMNDAIFSVACAWNAVPSHVFRRAWRKLWPSVAFAEGSSSEEELEAECFPVKPHNKSFAHILELVKEGSSCPGQLRQRQAASWGVAGREAEGGRPPAATSPAEVVWSSEKTPKADQDGRGDPGEGEEVAWEQAAVAFDAVLRFAERQPCFSAQEVGQLRALRAVFRSQQQETVGLEDVVVTSPEELAIPKCCLEASTET.

An HTH psq-type domain is found at 11 to 62 (RGEKRKRVVLTLKEKIDICTRLEKGESRKALMQEYNVGMSTLYDIRAHKAQL). 2 consecutive DNA-binding regions (H-T-H motif) follow at residues 38–58 (RKAL…IRAH) and 110–142 (PMLI…FKAR). One can recognise an HTH CENPB-type domain in the interval 77–149 (QRRTLHTPKL…KARHGIKKLD (73 aa)). The DDE-1 domain occupies 213–382 (KDRLTVLMCA…VPSHVFRRAW (170 aa)). Phosphoserine is present on S414. The interval 439 to 482 (SWGVAGREAEGGRPPAATSPAEVVWSSEKTPKADQDGRGDPGEG) is disordered. Basic and acidic residues predominate over residues 467-479 (KTPKADQDGRGDP).

It belongs to the tigger transposable element derived protein family. Expressed ubiquitously.

The protein localises to the nucleus. Its function is as follows. May bind DNA. The sequence is that of Jerky protein homolog from Homo sapiens (Human).